The primary structure comprises 1463 residues: Probable ATP-dependent RNA helicase spindle-E (1463 aa).

The 166-residue stretch at Leu-131–Phe-296 folds into the Helicase ATP-binding domain. Residue Gly-144 to Thr-151 coordinates ATP. The DEAH box motif lies at Asp-243 to His-246. The Helicase C-terminal domain maps to Val-348–Asp-531. Positions Ala-951–Phe-1016 constitute a Tudor domain.

The protein belongs to the DEAD box helicase family. DEAH subfamily.

The protein localises to the cytoplasm. It catalyses the reaction ATP + H2O = ADP + phosphate + H(+). Its function is as follows. Probable ATP-binding RNA helicase which plays a central role during gametogenesis by repressing transposable elements and preventing their mobilization, which is essential for the germline integrity. Acts via the piRNA metabolic process, which mediates the repression of transposable elements during meiosis by forming complexes composed of piRNAs and Piwi proteins and govern the methylation and subsequent repression of transposons. This chain is Probable ATP-dependent RNA helicase spindle-E (spn-E), found in Anopheles gambiae (African malaria mosquito).